A 510-amino-acid polypeptide reads, in one-letter code: Putative cytochrome P450 cyp-13B1 (510 aa).

A heme-binding site is contributed by Cys456.

This sequence belongs to the cytochrome P450 family. Heme is required as a cofactor.

Functionally, cytochromes P450 are a group of heme-thiolate monooxygenases. They oxidize a variety of structurally unrelated compounds, including steroids, fatty acids, and xenobiotics. May play a role in the regulation of lifespan. The protein is Putative cytochrome P450 cyp-13B1 of Caenorhabditis elegans.